Here is a 121-residue protein sequence, read N- to C-terminus: Flagellar protein FliT (121 aa).

The required for homodimerization stretch occupies residues 1–50 (MNNAPHLYFAWQQLVEKSQLMLRLATEEQWDELIASEMAYVNAVQEIAHL). The tract at residues 60–98 (MQEQLRPMLHLILDNESKVKQLLQIRMDELAKLVGQSSV) is fliD binding.

The protein belongs to the FliT family. In terms of assembly, homodimer. Interacts with FliD and FlhC.

The protein resides in the cytoplasm. It localises to the cytosol. Dual-function protein that regulates the transcription of class 2 flagellar operons and that also acts as an export chaperone for the filament-capping protein FliD. As a transcriptional regulator, acts as an anti-FlhDC factor; it directly binds FlhC, thus inhibiting the binding of the FlhC/FlhD complex to class 2 promoters, resulting in decreased expression of class 2 flagellar operons. As a chaperone, effects FliD transition to the membrane by preventing its premature polymerization, and by directing it to the export apparatus. This is Flagellar protein FliT from Shigella flexneri serotype 5b (strain 8401).